The sequence spans 188 residues: Protein GrpE (188 aa).

The interval 1–24 (MSDENKPGEAAELDAGVAPEAQPE) is disordered.

It belongs to the GrpE family. In terms of assembly, homodimer.

Its subcellular location is the cytoplasm. Participates actively in the response to hyperosmotic and heat shock by preventing the aggregation of stress-denatured proteins, in association with DnaK and GrpE. It is the nucleotide exchange factor for DnaK and may function as a thermosensor. Unfolded proteins bind initially to DnaJ; upon interaction with the DnaJ-bound protein, DnaK hydrolyzes its bound ATP, resulting in the formation of a stable complex. GrpE releases ADP from DnaK; ATP binding to DnaK triggers the release of the substrate protein, thus completing the reaction cycle. Several rounds of ATP-dependent interactions between DnaJ, DnaK and GrpE are required for fully efficient folding. The polypeptide is Protein GrpE (Hyphomonas neptunium (strain ATCC 15444)).